A 675-amino-acid chain; its full sequence is G-protein coupled receptor moody (675 aa).

Over 1–44 (MSDETTGSLGDAFSPMDTPTTTIMPPPADVDESGFSHSLLTFAA) the chain is Extracellular. Residues 45 to 65 (VMTFLIMIVGICGNLLTVVAL) form a helical membrane-spanning segment. The Cytoplasmic segment spans residues 66-73 (LKCPKVRN). A helical membrane pass occupies residues 74–94 (VAAAFIISLCIADLLFCALVL). Residues 95–115 (PFQGLRFVQGTWRHGEVLCRL) lie on the Extracellular side of the membrane. A disulfide bond links C113 and C192. Residues 116-136 (IPFIQYGNIGVSLLCIAMITI) form a helical membrane-spanning segment. The Cytoplasmic segment spans residues 137–156 (NRYVMITHYSLYNRIYKRHW). Residues 157–177 (IAIMIAACWLFSYGMQLPTLL) form a helical membrane-spanning segment. Residues 178-206 (GAWGRFGYDARLQTCSIMSDRHGHSSKTT) are Extracellular-facing. Residues 207-227 (LFITAFVIPCLVIIACYAKIF) traverse the membrane as a helical segment. The Cytoplasmic portion of the chain corresponds to 228-327 (WVVHKSEQRL…AKRNEWRITK (100 aa)). The disordered stretch occupies residues 258 to 316 (TSMPSGDGANPSQVPAGCRVSSDSSSNYSTDVPDTTPGGAGGGAGVKQQPSRVKDQREV). Residues 278-294 (SSDSSSNYSTDVPDTTP) are compositionally biased toward low complexity. Residues 328–348 (MVLAIFLSFVICYLPITIVKV) form a helical membrane-spanning segment. Residues 349–359 (ADKDVEHPSLH) are Extracellular-facing. Residues 360-380 (IFSYIMLYLSACINPIIYVIM) form a helical membrane-spanning segment. Over 381-675 (NKQYRKAYKT…LMDKKKFPKD (295 aa)) the chain is Cytoplasmic. Disordered regions lie at residues 475–568 (SKSS…GNGS) and 588–675 (LPPT…FPKD). Low complexity predominate over residues 536–551 (SSVISANPSSSPSPSS). Positions 552–565 (SGGGIYRPGIGSMG) are enriched in gly residues. Over residues 666–675 (LMDKKKFPKD) the composition is skewed to basic and acidic residues.

Belongs to the G-protein coupled receptor 1 family.

It localises to the cell membrane. Its function is as follows. Required in glia to regulate the acute sensitivity to cocaine and to continuously maintain the proper blood-brain barrier (BBB) function. A moody-mediated signaling pathway functions in glia to regulate nervous system insulation and drug-related behaviors. The polypeptide is G-protein coupled receptor moody (Drosophila pseudoobscura pseudoobscura (Fruit fly)).